Reading from the N-terminus, the 30-residue chain is Cysteine-rich venom protein annuliferin-a (30 aa).

The protein belongs to the CRISP family. Contains 8 disulfide bonds. As to expression, expressed by the venom gland.

The protein resides in the secreted. Inhibits calcium-activated potassium channels (KCa), voltage-gated potassium channel (Kv), and the calcium release channel/ryanodine receptor (RyR). The protein is Cysteine-rich venom protein annuliferin-a of Naja annulifera (Banded Egyptian cobra).